Reading from the N-terminus, the 618-residue chain is DNA mismatch repair protein MutL (618 aa).

The protein belongs to the DNA mismatch repair MutL/HexB family.

Functionally, this protein is involved in the repair of mismatches in DNA. It is required for dam-dependent methyl-directed DNA mismatch repair. May act as a 'molecular matchmaker', a protein that promotes the formation of a stable complex between two or more DNA-binding proteins in an ATP-dependent manner without itself being part of a final effector complex. The protein is DNA mismatch repair protein MutL of Porphyromonas gingivalis (strain ATCC 33277 / DSM 20709 / CIP 103683 / JCM 12257 / NCTC 11834 / 2561).